The chain runs to 389 residues: Cytochrome b (389 aa).

4 consecutive transmembrane segments (helical) span residues 32-52 (FGSLLALCLIIQILTGCFLAM), 76-98 (YILRYTHANVASFFFIFIYVHIG), 113-133 (LWSIGVIILVLMMAIGFLGYV), and 179-199 (FFSLHYILPFVLAALAVAHMI). Heme b-binding residues include His82 and His96. His183 and His197 together coordinate heme b. His202 is an a ubiquinone binding site. 4 helical membrane passes run 225-245 (FIFKDLVTIFAFFLVLSIIVF), 289-309 (LLGVLAMFGSLLILLIMPFVD), 322-342 (INMVFFTIFVCNFITLGLVGA), and 349-369 (FIFLGQVCTTIYFAYFFVIVP).

The protein belongs to the cytochrome b family. In terms of assembly, fungal cytochrome b-c1 complex contains 10 subunits; 3 respiratory subunits, 2 core proteins and 5 low-molecular weight proteins. Cytochrome b-c1 complex is a homodimer. Heme b is required as a cofactor.

The protein localises to the mitochondrion inner membrane. Component of the ubiquinol-cytochrome c reductase complex (complex III or cytochrome b-c1 complex) that is part of the mitochondrial respiratory chain. The b-c1 complex mediates electron transfer from ubiquinol to cytochrome c. Contributes to the generation of a proton gradient across the mitochondrial membrane that is then used for ATP synthesis. The chain is Cytochrome b (COB) from Mycena viridimarginata.